The primary structure comprises 172 residues: Phosphopantetheine adenylyltransferase (172 aa).

Residue T13 participates in substrate binding. ATP-binding positions include T13–F14 and H21. Residues K45, L81, and R95 each coordinate substrate. ATP is bound by residues G96–R98, E106, and S131–R137.

It belongs to the bacterial CoaD family. Homohexamer. Mg(2+) serves as cofactor.

It is found in the cytoplasm. It carries out the reaction (R)-4'-phosphopantetheine + ATP + H(+) = 3'-dephospho-CoA + diphosphate. The protein operates within cofactor biosynthesis; coenzyme A biosynthesis; CoA from (R)-pantothenate: step 4/5. In terms of biological role, reversibly transfers an adenylyl group from ATP to 4'-phosphopantetheine, yielding dephospho-CoA (dPCoA) and pyrophosphate. In Rhodospirillum rubrum (strain ATCC 11170 / ATH 1.1.1 / DSM 467 / LMG 4362 / NCIMB 8255 / S1), this protein is Phosphopantetheine adenylyltransferase.